The following is a 90-amino-acid chain: Conotoxin Mr22.1 (90 aa).

Residues 1-18 form the signal peptide; it reads MMTRVFFAMFFLMALTEG. Positions 19–49 are excised as a propeptide; sequence WPRLYDSDCVRGRNMHITCFKDQTCGLTVKR. A 6'-bromotryptophan modification is found at tryptophan 75.

Belongs to the E superfamily. Post-translationally, contains 4 disulfide bonds. Expressed by the venom duct.

It localises to the secreted. The sequence is that of Conotoxin Mr22.1 from Conus marmoreus (Marble cone).